We begin with the raw amino-acid sequence, 223 residues long: Deoxyribose-phosphate aldolase (223 aa).

Aspartate 89 serves as the catalytic Proton donor/acceptor. Catalysis depends on lysine 152, which acts as the Schiff-base intermediate with acetaldehyde. Lysine 181 serves as the catalytic Proton donor/acceptor.

Belongs to the DeoC/FbaB aldolase family. DeoC type 1 subfamily.

It localises to the cytoplasm. It catalyses the reaction 2-deoxy-D-ribose 5-phosphate = D-glyceraldehyde 3-phosphate + acetaldehyde. The protein operates within carbohydrate degradation; 2-deoxy-D-ribose 1-phosphate degradation; D-glyceraldehyde 3-phosphate and acetaldehyde from 2-deoxy-alpha-D-ribose 1-phosphate: step 2/2. Functionally, catalyzes a reversible aldol reaction between acetaldehyde and D-glyceraldehyde 3-phosphate to generate 2-deoxy-D-ribose 5-phosphate. In Bacillus cereus (strain ATCC 10987 / NRS 248), this protein is Deoxyribose-phosphate aldolase.